A 77-amino-acid chain; its full sequence is Bradykinin-potentiating peptide (77 aa).

The N-terminal stretch at 1-22 (MNKKTLLVIFIVTLLIADEVNS) is a signal peptide. Residues 74-77 (RRRR) constitute a propeptide that is removed on maturation.

It belongs to the non-disulfide-bridged peptide (NDBP) superfamily. Long chain multifunctional peptide (group 2) family. In terms of tissue distribution, expressed by the venom gland.

Its subcellular location is the secreted. Antimicrobial peptide. May also inhibit angiotensin-converting enzyme (ACE) and potentiate bradykinin (BK). This chain is Bradykinin-potentiating peptide, found in Tityus discrepans (Venezuelan scorpion).